Here is a 449-residue protein sequence, read N- to C-terminus: Ribosomal protein uS12 methylthiotransferase RimO (449 aa).

Residues 7–123 form the MTTase N-terminal domain; sequence QKVSMVSLGC…VAEILAEHHA (117 aa). [4Fe-4S] cluster-binding residues include cysteine 16, cysteine 52, cysteine 86, cysteine 161, cysteine 165, and cysteine 168. The Radical SAM core domain occupies 147–377; it reads SSPGWYAYLK…MKTQARVSFR (231 aa). The TRAM domain maps to 380–448; sequence RAMVGQTEQV…DYDLVAEMIE (69 aa).

It belongs to the methylthiotransferase family. RimO subfamily. The cofactor is [4Fe-4S] cluster.

It localises to the cytoplasm. The enzyme catalyses L-aspartate(89)-[ribosomal protein uS12]-hydrogen + (sulfur carrier)-SH + AH2 + 2 S-adenosyl-L-methionine = 3-methylsulfanyl-L-aspartate(89)-[ribosomal protein uS12]-hydrogen + (sulfur carrier)-H + 5'-deoxyadenosine + L-methionine + A + S-adenosyl-L-homocysteine + 2 H(+). Functionally, catalyzes the methylthiolation of an aspartic acid residue of ribosomal protein uS12. The chain is Ribosomal protein uS12 methylthiotransferase RimO from Trichlorobacter lovleyi (strain ATCC BAA-1151 / DSM 17278 / SZ) (Geobacter lovleyi).